A 168-amino-acid chain; its full sequence is MAFFRALCFVLLVGFAAACQPDCSWKCPPKCPPMWTFYNGNCYRYFGTGKTYDEAESHCQEFTEVGLGHLASIASAEENNLLLTMWKSVRTTTTGGLWIGLNDQAEEGNFIWTDGSAVTFTDWATTQPDNYQNEDCAHMRHELDGDDRWNDIACSRAFAYVCKMSTTN.

An N-terminal signal peptide occupies residues 1–18; that stretch reads MAFFRALCFVLLVGFAAA. The C-type lectin domain maps to 38-163; that stretch reads YNGNCYRYFG…CSRAFAYVCK (126 aa). 2 cysteine pairs are disulfide-bonded: Cys-59–Cys-162 and Cys-136–Cys-154.

In terms of assembly, monomer, homodimer and homooligomer.

Its function is as follows. Alpha-N-acetylgalactosamine-specific lectin. The oligomeric form has Ca(2+)-dependent hemagglutination activity towards sheep erythrocytes. Its hemagglutination activity is inhibited by various monosaccharides, oligosaccharides and glycopeptides, including inhibition by GalNAc, blood group A trisaccharide, Tn antigen, mucin and asialomucin. The polypeptide is Alpha-N-acetylgalactosamine-specific lectin (Patiria pectinifera (Starfish)).